The primary structure comprises 271 residues: Tryptophan synthase alpha chain (271 aa).

Active-site proton acceptor residues include Glu-56 and Asp-67.

The protein belongs to the TrpA family. Tetramer of two alpha and two beta chains.

The enzyme catalyses (1S,2R)-1-C-(indol-3-yl)glycerol 3-phosphate + L-serine = D-glyceraldehyde 3-phosphate + L-tryptophan + H2O. Its pathway is amino-acid biosynthesis; L-tryptophan biosynthesis; L-tryptophan from chorismate: step 5/5. The alpha subunit is responsible for the aldol cleavage of indoleglycerol phosphate to indole and glyceraldehyde 3-phosphate. This Mycobacterium intracellulare protein is Tryptophan synthase alpha chain.